Consider the following 102-residue polypeptide: Small integral membrane protein 29 (102 aa).

The N-linked (GlcNAc...) asparagine glycan is linked to Asn3. A helical membrane pass occupies residues 21 to 41 (VLGPFFLITLVGVVVAVVMYV).

Expressed in spleen, thymus, prostate, testis, uterus, small intestine, colon and peripheral blood leukocytes.

It localises to the membrane. The protein is Small integral membrane protein 29 of Homo sapiens (Human).